Consider the following 326-residue polypeptide: Nitrogen metabolite regulation-like protein bik4 (326 aa).

Residues 13–18 (GATGEV) and 161–164 (FASN) each bind NADP(+).

The protein belongs to the NmrA-type oxidoreductase family.

Nitrogen metabolite regulation-like protein involved in the regulation of the gene cluster that mediates the biosynthesis of bikaverin, a red pigment also considered as a mycotoxin. This is Nitrogen metabolite regulation-like protein bik4 from Gibberella fujikuroi (strain CBS 195.34 / IMI 58289 / NRRL A-6831) (Bakanae and foot rot disease fungus).